The chain runs to 302 residues: Methylsterol monooxygenase erg25A (302 aa).

N-linked (GlcNAc...) asparagine glycosylation is present at asparagine 5. Helical transmembrane passes span 47-67 (NIVA…IYFS), 105-125 (YILL…HPMM), and 132-152 (FTIP…FFLL). The Fatty acid hydroxylase domain occupies 147 to 283 (IIFFLLEDTY…FRHWDVLMGT (137 aa)). The Histidine box-1 motif lies at 161-165 (HRAMH). The Histidine box-2 motif lies at 174–178 (HRIHH). A helical membrane pass occupies residues 193 to 213 (PWETLLLGLGTIGPPLLLALM). A Histidine box-3 motif is present at residues 258–264 (WHDDHHR). Asparagine 269 carries N-linked (GlcNAc...) asparagine glycosylation.

Belongs to the sterol desaturase family. Fe cation is required as a cofactor.

It localises to the endoplasmic reticulum membrane. It participates in steroid metabolism; ergosterol biosynthesis. In terms of biological role, sterol-C4-methyl oxidase; part of the third module of ergosterol biosynthesis pathway that includes the late steps of the pathway. Erg25A is a catalytic component of the C-4 demethylation complex that catalyzes the conversion of 4,4-dimethylfecosterol into fecosterol via 4-methylfecosterol. The third module or late pathway involves the ergosterol synthesis itself through consecutive reactions that mainly occur in the endoplasmic reticulum (ER) membrane. Firstly, the squalene synthase erg9 catalyzes the condensation of 2 farnesyl pyrophosphate moieties to form squalene, which is the precursor of all steroids. Squalene synthase is crucial for balancing the incorporation of farnesyl diphosphate (FPP) into sterol and nonsterol isoprene synthesis. Secondly, squalene is converted into lanosterol by the consecutive action of the squalene epoxidase erg1 and the lanosterol synthase erg7. Then, the delta(24)-sterol C-methyltransferase erg6 methylates lanosterol at C-24 to produce eburicol. Eburicol is the substrate of the sterol 14-alpha demethylase encoded by cyp51A and cyp51B, to yield 4,4,24-trimethyl ergosta-8,14,24(28)-trienol. The C-14 reductase erg24 then reduces the C14=C15 double bond which leads to 4,4-dimethylfecosterol. A sequence of further demethylations at C-4, involving the C-4 demethylation complex containing the C-4 methylsterol oxidases erg25A or erg25B, the sterol-4-alpha-carboxylate 3-dehydrogenase erg26 and the 3-keto-steroid reductase erg27, leads to the production of fecosterol via 4-methylfecosterol. The C-8 sterol isomerase erg2 then catalyzes the reaction which results in unsaturation at C-7 in the B ring of sterols and thus converts fecosterol to episterol. The sterol-C5-desaturase erg3B then catalyzes the introduction of a C-5 double bond in the B ring to produce 5-dehydroepisterol. The 2 other sterol-C5-desaturases, erg3A and erg3C, seem to be less important in ergosterol biosynthesis. The C-22 sterol desaturase erg5 further converts 5-dehydroepisterol into ergosta-5,7,22,24(28)-tetraen-3beta-ol by forming the C-22(23) double bond in the sterol side chain. Finally, ergosta-5,7,22,24(28)-tetraen-3beta-ol is substrate of the C-24(28) sterol reductases erg4A and erg4B to produce ergosterol. Possible alternative sterol biosynthetic pathways might exist from fecosterol to ergosterol, depending on the activities of the erg3 isoforms. The polypeptide is Methylsterol monooxygenase erg25A (Aspergillus fumigatus (strain ATCC MYA-4609 / CBS 101355 / FGSC A1100 / Af293) (Neosartorya fumigata)).